Consider the following 65-residue polypeptide: DNA-directed RNA polymerase subunit Rpo10 (65 aa).

Residues Cys7, Cys10, Cys44, and Cys45 each contribute to the Zn(2+) site.

Belongs to the archaeal Rpo10/eukaryotic RPB10 RNA polymerase subunit family. In terms of assembly, part of the RNA polymerase complex. Zn(2+) is required as a cofactor.

The protein resides in the cytoplasm. The catalysed reaction is RNA(n) + a ribonucleoside 5'-triphosphate = RNA(n+1) + diphosphate. DNA-dependent RNA polymerase (RNAP) catalyzes the transcription of DNA into RNA using the four ribonucleoside triphosphates as substrates. This chain is DNA-directed RNA polymerase subunit Rpo10, found in Pyrococcus furiosus (strain ATCC 43587 / DSM 3638 / JCM 8422 / Vc1).